Here is a 252-residue protein sequence, read N- to C-terminus: Cilia- and flagella-associated protein 300 (252 aa).

This sequence belongs to the CFAP300 family.

It is found in the cytoplasm. Its subcellular location is the cytoskeleton. The protein localises to the cilium axoneme. Its function is as follows. Cilium- and flagellum-specific protein that plays a role in axonemal structure organization and motility. Plays a role in outer and inner axonemal dynein arm assembly. This Paramecium tetraurelia protein is Cilia- and flagella-associated protein 300.